Consider the following 111-residue polypeptide: Ribonuclease P protein component (111 aa).

This sequence belongs to the RnpA family. As to quaternary structure, consists of a catalytic RNA component (M1 or rnpB) and a protein subunit.

It catalyses the reaction Endonucleolytic cleavage of RNA, removing 5'-extranucleotides from tRNA precursor.. RNaseP catalyzes the removal of the 5'-leader sequence from pre-tRNA to produce the mature 5'-terminus. It can also cleave other RNA substrates such as 4.5S RNA. The protein component plays an auxiliary but essential role in vivo by binding to the 5'-leader sequence and broadening the substrate specificity of the ribozyme. This is Ribonuclease P protein component from Streptococcus thermophilus (strain ATCC BAA-491 / LMD-9).